Reading from the N-terminus, the 213-residue chain is Inactive ribonuclease-like protein 10 (213 aa).

Residues 1 to 24 form the signal peptide; the sequence is MKLTLVQFFFMMLLLLLGLGVGLG. Asn128 carries an N-linked (GlcNAc...) asparagine glycan.

Belongs to the pancreatic ribonuclease family. The N-terminus is blocked. Glycosylated. Male-specific expression in proximal caput of the epididymis.

It localises to the secreted. Secreted proximal epididymal protein required for post-testicular sperm maturation and male fertility. May be involved in sperm adhesion to the egg zona pellucida. Does not have ribonuclease activity. The polypeptide is Inactive ribonuclease-like protein 10 (RNASE10) (Sus scrofa (Pig)).